Reading from the N-terminus, the 379-residue chain is Transcription termination factor 1b, mitochondrial (379 aa).

The N-terminal 37 residues, Met-1 to Thr-37, are a transit peptide targeting the mitochondrion. Interaction with DNA regions lie at residues Arg-151–Ser-152, Gln-229–Arg-233, Ser-306–Lys-313, Ser-337–Thr-340, and Ser-366–Lys-373.

It belongs to the mTERF family. As to quaternary structure, monomer. Post-translationally, phosphoprotein with mostly four phosphate groups. While the DNA-binding activity is unaffected by the phosphorylation state, only the phosphorylated form of the protein is active for termination activity. Functioning seems to be regulated by phosphorylation. In terms of tissue distribution, expressed strongly in the heart and at lower levels in brain, liver and kidney.

Its subcellular location is the mitochondrion. Transcription termination factor. Binds to a 28 bp region within the tRNA(Leu(uur)) gene at a position immediately adjacent to and downstream of the 16S rRNA gene; this region comprises a tridecamer sequence critical for directing accurate termination. Binds DNA along the major grove and promotes DNA bending and partial unwinding. Promotes base flipping. Transcription termination activity appears to be polarized with highest specificity for transcripts initiated on the light strand. The polypeptide is Transcription termination factor 1b, mitochondrial (Mus musculus (Mouse)).